The following is a 225-amino-acid chain: MSKRYFVTGTDTEVGKTVASCALLQAAKAAGYRTAGYKPVASGSEKTPEGLRNSDALALQRNSSLQLDYATVNPYTFAEPTSPHIISAQEGRPIESLVMSAGLRALEQQADWVLVEGAGGWFTPLSDTFTFADWVTQEQLPVILVVGVKLGCINHAMLTAQVIQHAGLTLAGWVANDVTPPGKRHAEYMTTLTRMIPAPLLGEIPWLAENPENAATGKYINLALL.

Residues Glu-13 and Thr-17 each coordinate Mg(2+). 13–18 (EVGKTV) provides a ligand contact to ATP. Lys-38 is an active-site residue. Ser-42 is a binding site for substrate. Positions 55 and 116 each coordinate Mg(2+). ATP is bound by residues Asp-55, 116–119 (EGAG), and 176–177 (ND). Tyr-188 serves as a coordination point for substrate. ATP-binding positions include 205-207 (PWL) and Glu-212.

This sequence belongs to the dethiobiotin synthetase family. Homodimer. Mg(2+) is required as a cofactor.

The protein localises to the cytoplasm. The enzyme catalyses (7R,8S)-7,8-diammoniononanoate + CO2 + ATP = (4R,5S)-dethiobiotin + ADP + phosphate + 3 H(+). Its pathway is cofactor biosynthesis; biotin biosynthesis; biotin from 7,8-diaminononanoate: step 1/2. Catalyzes a mechanistically unusual reaction, the ATP-dependent insertion of CO2 between the N7 and N8 nitrogen atoms of 7,8-diaminopelargonic acid (DAPA, also called 7,8-diammoniononanoate) to form a ureido ring. Only CTP can partially replace ATP while diaminobiotin is only 37% as effective as 7,8-diaminopelargonic acid. In another study both CTP and GTP (but not ITP, TTP or UTP) can partially replace ATP. This is ATP-dependent dethiobiotin synthetase BioD 1 from Escherichia coli (strain K12).